Consider the following 110-residue polypeptide: Parvalbumin alpha (110 aa).

An N-acetylserine modification is found at S2. 2 positions are modified to phosphoserine: S2 and S24. 2 EF-hand domains span residues 39–74 and 78–110; these read KSPEDVKKVFHILDKDKSGFIEEEELGFILKGFSPD and LSVKETKTLLAAGDKDGDGKIGADEFSTLVAES. 11 residues coordinate Ca(2+): D52, D54, S56, F58, E60, E63, D91, D93, D95, K97, and E102.

Belongs to the parvalbumin family.

Functionally, in muscle, parvalbumin is thought to be involved in relaxation after contraction. It binds two calcium ions. The protein is Parvalbumin alpha (PVALB) of Bos taurus (Bovine).